The sequence spans 443 residues: Glutamine synthetase (443 aa).

Residues 16-101 form the GS beta-grasp domain; it reads NGVKFIRLQF…LICDVYKPDG (86 aa). One can recognise a GS catalytic domain in the interval 108-443; sequence PRHVLKRANA…WELENYLNKY (336 aa). Mg(2+) contacts are provided by Glu-131 and Glu-133. Glu-183 lines the ATP pocket. Positions 188 and 195 each coordinate Mg(2+). Residues 239 to 240 and Gly-240 contribute to the L-glutamate site; that span reads NG. A Mg(2+)-binding site is contributed by His-244. Ser-248 contacts ATP. Positions 297, 303, and 315 each coordinate L-glutamate. Positions 315 and 320 each coordinate ATP. Residue Glu-332 coordinates Mg(2+). Arg-334 provides a ligand contact to L-glutamate.

The protein belongs to the glutamine synthetase family. In terms of assembly, oligomer of 12 subunits arranged in the form of two hexagons. In its feedback-inhibited form, interacts with TnrA in order to block its DNA-binding activity. It depends on Mg(2+) as a cofactor.

The protein resides in the cytoplasm. It catalyses the reaction L-glutamate + NH4(+) + ATP = L-glutamine + ADP + phosphate + H(+). Inhibited by glutamine. Its function is as follows. Glutamine synthetase (GS) is an unusual multitasking protein that functions as an enzyme, a transcription coregulator, and a chaperone in ammonium assimilation and in the regulation of genes involved in nitrogen metabolism. It catalyzes the ATP-dependent biosynthesis of glutamine from glutamate and ammonia. Feedback-inhibited GlnA also interacts with and regulates the activity of the transcriptional regulator TnrA. During nitrogen limitation, TnrA is in its DNA-binding active state and turns on the transcription of genes required for nitrogen assimilation. Under conditions of nitrogen excess, feedback-inhibited GlnA forms a stable complex with TnrA, which inhibits its DNA-binding activity. In contrast, feedback-inhibited GlnA acts as a chaperone to stabilize the DNA-binding activity of GlnR, which represses the transcription of nitrogen assimilation genes. The protein is Glutamine synthetase of Clostridium saccharobutylicum.